Reading from the N-terminus, the 596-residue chain is Succinate dehydrogenase flavoprotein subunit (596 aa).

FAD is bound by residues 18 to 23 (GAGGAG), 41 to 56 (SKLF…AQGG), and Asp-225. His-49 bears the Tele-8alpha-FAD histidine mark. Substrate contacts are provided by His-246 and Thr-258. The active-site Proton acceptor is Arg-290. Residue His-357 coordinates substrate. Position 391 (Glu-391) interacts with FAD. Residue Arg-402 coordinates substrate. 407 to 408 (SL) is an FAD binding site.

Belongs to the FAD-dependent oxidoreductase 2 family. FRD/SDH subfamily. As to quaternary structure, part of an enzyme complex containing four subunits: a flavoprotein, an iron-sulfur, cytochrome b-556, and a hydrophobic anchor protein. FAD serves as cofactor.

Its subcellular location is the cell inner membrane. It catalyses the reaction a quinone + succinate = fumarate + a quinol. The protein operates within carbohydrate metabolism; tricarboxylic acid cycle; fumarate from succinate (bacterial route): step 1/1. In Rickettsia bellii (strain RML369-C), this protein is Succinate dehydrogenase flavoprotein subunit (sdhA).